Consider the following 390-residue polypeptide: NADH-quinone oxidoreductase subunit D (390 aa).

It belongs to the complex I 49 kDa subunit family. In terms of assembly, NDH-1 is composed of 14 different subunits. Subunits NuoB, C, D, E, F, and G constitute the peripheral sector of the complex.

It is found in the cell membrane. It catalyses the reaction a quinone + NADH + 5 H(+)(in) = a quinol + NAD(+) + 4 H(+)(out). NDH-1 shuttles electrons from NADH, via FMN and iron-sulfur (Fe-S) centers, to quinones in the respiratory chain. The immediate electron acceptor for the enzyme in this species is believed to be ubiquinone. Couples the redox reaction to proton translocation (for every two electrons transferred, four hydrogen ions are translocated across the cytoplasmic membrane), and thus conserves the redox energy in a proton gradient. This Wolbachia pipientis wMel protein is NADH-quinone oxidoreductase subunit D.